We begin with the raw amino-acid sequence, 217 residues long: Lipid transferase CIDEA (217 aa).

Positions Pro-33–Pro-110 constitute a CIDE-N domain. Residues Cys-163–Ala-180 are amphipathic helix.

This sequence belongs to the CIDE family. In terms of assembly, homodimer. Interacts with CIDEC. Directly interacts with CEBPB. Interacts with isoform CLSTN3beta of CLSTN3; inhibiting the lipid transferase activity of CIDEA. Highly expressed in brown adipose tissue and, at lower levels, in white adipose tissue (at protein level). Undetectable in undifferentiated preadipocytes. Expressed in mammary gland during pregnancy and lactation, in epithelial cells, but not in the surrounding adipose tissue. Secreted into milk via milk fat globules.

It is found in the lipid droplet. It localises to the nucleus. It carries out the reaction a triacyl-sn-glycerol(in) = a triacyl-sn-glycerol(out). Its function is as follows. Lipid transferase that promotes unilocular lipid droplet formation by mediating lipid droplet fusion. Lipid droplet fusion promotes their enlargement, restricting lipolysis and favoring lipid storage. Localizes on the lipid droplet surface, at focal contact sites between lipid droplets, and mediates atypical lipid droplet fusion by promoting directional net neutral lipid transfer from the smaller to larger lipid droplets. The transfer direction may be driven by the internal pressure difference between the contacting lipid droplet pair and occurs at a lower rate than that promoted by CIDEC. May also act as a CEBPB coactivator in epithelial cells to control the expression of a subset of CEBPB downstream target genes, including ID2, IGF1, PRLR, SOCS1, SOCS3, XDH, but not casein. By interacting with CEBPB, strengthens the association of CEBPB with the XDH promoter, increases histone acetylation and dissociates HDAC1 from the promoter. When overexpressed, induces apoptosis; the physiological significance of its role in apoptosis is unclear. This is Lipid transferase CIDEA from Mus musculus (Mouse).